Consider the following 595-residue polypeptide: MHRYRSHTCAALRKTDVGSNVRLSGWVHRVRDHGGILFIDLRDHYGITQIVADPDSPAFKVAETVRGEWVIRVDGEVKARADDAVNTNLPTGEVEIFATEIEVLSPAKELPLPVFGEPDYPEDIRLKYRFLDLRRETLHKNIMSRTKIIAAMRRRMTEIGFNEFSTPILTASSPEGARDFLVPSRIHPGKFYALPQAPQQYKQLLMVAGFDRYFQIAPCFRDEDPRADRLPGEFYQLDLEMSFVTQEEVWETMEPVMRGIFEEFAEGKPVTKVFRRIAYDDAIRTYGSDKPDLRNPIEMQAVTDHFAGSGFKVFANMIANDAKVEVWAIPAKTGGSRAFCDRMNSWAQSEGQPGLGYIFWRKEGDKLEGAGPIAKNIGEERTEAIRKQMGLEDGDACFFVAGLPSKFYKFAGDARTRAGEELNLVDRDRFELAWIIDFPFYEWDEDNKKIDFAHNPFSMPQGGMDALENMDPLEIKAYQYDLVCNGFEIASGSIRNQLPEVMVKAFEKVGLSQQDVEERFGGLYRAFQYGAPPHGGMAAGIDRVIMLLVGAKNLREISLFPMNQQALDLLMGAPSEVSPAQLRDLHVRLAPVQKS.

Residue Glu175 participates in L-aspartate binding. An aspartate region spans residues 199-202 (QQYK). L-aspartate-binding residues include Arg221 and His454. 221–223 (RDE) provides a ligand contact to ATP. Residue Glu488 coordinates ATP. Arg495 contacts L-aspartate. ATP is bound at residue 540 to 543 (GIDR).

Belongs to the class-II aminoacyl-tRNA synthetase family. Type 1 subfamily. As to quaternary structure, homodimer.

It is found in the cytoplasm. It carries out the reaction tRNA(Asx) + L-aspartate + ATP = L-aspartyl-tRNA(Asx) + AMP + diphosphate. In terms of biological role, aspartyl-tRNA synthetase with relaxed tRNA specificity since it is able to aspartylate not only its cognate tRNA(Asp) but also tRNA(Asn). Reaction proceeds in two steps: L-aspartate is first activated by ATP to form Asp-AMP and then transferred to the acceptor end of tRNA(Asp/Asn). This Brucella canis (strain ATCC 23365 / NCTC 10854 / RM-666) protein is Aspartate--tRNA(Asp/Asn) ligase.